The primary structure comprises 133 residues: Ribonuclease VapC1 (133 aa).

Residues D7 and D98 each coordinate Mg(2+).

The protein belongs to the PINc/VapC protein family. Requires Mg(2+) as cofactor.

Toxic component of a type II toxin-antitoxin (TA) system. The cognate antitoxin is VapB1. This is Ribonuclease VapC1 from Mycobacterium tuberculosis (strain CDC 1551 / Oshkosh).